We begin with the raw amino-acid sequence, 267 residues long: LexA repressor (267 aa).

A disordered region spans residues M1 to R44. The segment covering P20 to K38 has biased composition (basic and acidic residues). The H-T-H motif DNA-binding region spans I65 to T85. A disordered region spans residues G111 to E140. The span at Q112–S129 shows a compositional bias: polar residues. Catalysis depends on for autocatalytic cleavage activity residues S191 and K228.

The protein belongs to the peptidase S24 family. As to quaternary structure, homodimer.

The catalysed reaction is Hydrolysis of Ala-|-Gly bond in repressor LexA.. Functionally, represses a number of genes involved in the response to DNA damage (SOS response), including recA and lexA. In the presence of single-stranded DNA, RecA interacts with LexA causing an autocatalytic cleavage which disrupts the DNA-binding part of LexA, leading to derepression of the SOS regulon and eventually DNA repair. This is LexA repressor from Corynebacterium jeikeium (strain K411).